The chain runs to 483 residues: Probable ATP-dependent RNA helicase DDX49 (483 aa).

Positions 2 to 30 (AGFAELGLSSWLVEQCRQLGLKQPTPVQL) match the Q motif motif. Positions 33–207 (IPAILEGRDC…GLATNQPFFW (175 aa)) constitute a Helicase ATP-binding domain. ATP is bound at residue 46-53 (AKTGSGKT). The DEAD box signature appears at 152–155 (DEAD). Positions 218–382 (QLDQRYLLVP…EFSVEEAEVL (165 aa)) constitute a Helicase C-terminal domain. Positions 444-483 (KEKVEETLKRQKAGRAGHKGRPPRTPSGSHSGPVPSQGLV) are disordered. Residues 453–465 (RQKAGRAGHKGRP) are compositionally biased toward basic residues.

The protein belongs to the DEAD box helicase family. DDX49/DBP8 subfamily.

The protein resides in the nucleus. The protein localises to the nucleolus. The catalysed reaction is ATP + H2O = ADP + phosphate + H(+). ATP-dependent RNA helicase that plays a role in various aspects of RNA metabolism including the regulation of mRNA export and the levels of pre-ribosomal RNA. Regulates the stability and synthesis of pre-ribosomal RNA and thereby regulates cell proliferation. Also possesses antiviral activity by recognizing gammaherpesvirus transcripts in the context of lytic reactivation. This Homo sapiens (Human) protein is Probable ATP-dependent RNA helicase DDX49 (DDX49).